We begin with the raw amino-acid sequence, 465 residues long: Trigger factor (465 aa).

The PPIase FKBP-type domain maps to 163–248 (GDVINFNFKG…INKIKENQPA (86 aa)). Residues 431 to 465 (EIVNKNQNDNEIEQDKEQKDNNEEKIKQENNLENK) form a disordered region. A compositionally biased stretch (basic and acidic residues) spans 443–465 (EQDKEQKDNNEEKIKQENNLENK).

Belongs to the FKBP-type PPIase family. Tig subfamily.

The protein resides in the cytoplasm. The enzyme catalyses [protein]-peptidylproline (omega=180) = [protein]-peptidylproline (omega=0). Functionally, involved in protein export. Acts as a chaperone by maintaining the newly synthesized protein in an open conformation. Functions as a peptidyl-prolyl cis-trans isomerase. The polypeptide is Trigger factor (Mesomycoplasma hyopneumoniae (strain J / ATCC 25934 / NCTC 10110) (Mycoplasma hyopneumoniae)).